A 141-amino-acid polypeptide reads, in one-letter code: Hemoglobin subunit alpha (141 aa).

Residues 1–141 (VLSSTDKSNV…VSTVLTSKYR (141 aa)) form the Globin domain. Residue serine 3 is modified to Phosphoserine. N6-succinyllysine is present on residues lysine 7 and lysine 11. An N6-acetyllysine; alternate modification is found at lysine 16. N6-succinyllysine; alternate is present on lysine 16. Tyrosine 24 carries the post-translational modification Phosphotyrosine. Serine 35 is modified (phosphoserine). Lysine 40 bears the N6-succinyllysine mark. Position 58 (histidine 58) interacts with O2. Histidine 87 is a heme b binding site. Serine 102 bears the Phosphoserine mark. At threonine 108 the chain carries Phosphothreonine. Serine 124 and serine 131 each carry phosphoserine. Residues threonine 134 and threonine 137 each carry the phosphothreonine modification. Residue serine 138 is modified to Phosphoserine.

Belongs to the globin family. Heterotetramer of two alpha chains and two beta chains. In terms of tissue distribution, red blood cells.

Its function is as follows. Involved in oxygen transport from the lung to the various peripheral tissues. In terms of biological role, hemopressin acts as an antagonist peptide of the cannabinoid receptor CNR1. Hemopressin-binding efficiently blocks cannabinoid receptor CNR1 and subsequent signaling. The chain is Hemoglobin subunit alpha from Pteropus vampyrus (Large flying fox).